The primary structure comprises 171 residues: Adenine phosphoribosyltransferase (171 aa).

It belongs to the purine/pyrimidine phosphoribosyltransferase family. In terms of assembly, homodimer.

It localises to the cytoplasm. The enzyme catalyses AMP + diphosphate = 5-phospho-alpha-D-ribose 1-diphosphate + adenine. It functions in the pathway purine metabolism; AMP biosynthesis via salvage pathway; AMP from adenine: step 1/1. Functionally, catalyzes a salvage reaction resulting in the formation of AMP, that is energically less costly than de novo synthesis. The polypeptide is Adenine phosphoribosyltransferase (Shouchella clausii (strain KSM-K16) (Alkalihalobacillus clausii)).